The sequence spans 401 residues: DNA damage checkpoint control protein RAD17 (401 aa).

Residues 367–393 (KKIKLPSEEENNKNRESEDEENHCKYP) form a disordered region. Basic and acidic residues predominate over residues 371-393 (LPSEEENNKNRESEDEENHCKYP). Ser383 bears the Phosphoserine mark.

It belongs to the rad1 family. Component of the checkpoint clamp complex composed of DDC1, MEC3 and RAD17. The interaction with MEC3 is performed in a RAD17-dependent manner. The checkpoint clamp complex loads onto DNA. Interacts with the DNA polymerase zeta subunit REV7. 2 RAD17 subunits also form a heterotrimer with one MEC3 subunit.

It localises to the nucleus. Component of the checkpoint clamp complex involved in the surveillance mechanism that allows the DNA repair pathways to act to restore the integrity of the DNA prior to DNA synthesis or separation of the replicated chromosomes. Associates with sites of DNA damage and modulates the MEC1 signaling pathway and the activation of RAD53 in response to DNA damage at phase G1. The complex also physically regulates DNA polymerase zeta-dependent mutagenesis by controlling the access of polymerase zeta to damaged DNA. Contrary to its human counterpart, the 9-1-1 complex, the checkpoint clamp complex shows no detectable exonuclease activity. The protein is DNA damage checkpoint control protein RAD17 (RAD17) of Saccharomyces cerevisiae (strain ATCC 204508 / S288c) (Baker's yeast).